Here is an 840-residue protein sequence, read N- to C-terminus: Phosphatidylglycerol lysyltransferase (840 aa).

Topologically, residues 1 to 8 (MNQEVKNK) are cytoplasmic. Residues 9-29 (IFSILKITFATALFIFVAITL) form a helical membrane-spanning segment. The Extracellular portion of the chain corresponds to 30–52 (YRELSGINFKDTLVEFSKINRMS). The chain crosses the membrane as a helical span at residues 53 to 73 (LVLLFIGGGASLVILSMYDVI). The Cytoplasmic portion of the chain corresponds to 74–89 (LSRALKMDISLGKVLR). The chain crosses the membrane as a helical span at residues 90-110 (VSYIINALNAIVGFGGFIGAG). The Extracellular segment spans residues 111–128 (VRAMVYKNYTHDKKKLVH). The helical transmembrane segment at 129–149 (FISLILISMLTGLSLLSLLIV) threads the bilayer. Residues 150-161 (FHVFDASLILDK) are Cytoplasmic-facing. A helical membrane pass occupies residues 162–182 (ITWVRWVLYVVSFFLPLFIIY). At 183 to 200 (SMVRPPDKNNRFVGLYCT) the chain is on the extracellular side. A helical transmembrane segment spans residues 201 to 221 (LVSCVEWLAAAVVLYFCGVIV). Topologically, residues 222 to 229 (DAHVSFMS) are cytoplasmic. A helical transmembrane segment spans residues 230-250 (FIAIFIIAALSGLVSFIPGGF). Topologically, residues 251–271 (GAFDLVVLLGFKTLGVPEEKV) are extracellular. Residues 272 to 292 (LLMLLLYRFAYYFVPVIIALI) form a helical membrane-spanning segment. Over 293 to 337 (LSSFEFGTSAKKYIEGSKYFIPAKDVTSFLMSYQKDIIAKIPSLS) the chain is Cytoplasmic. A helical membrane pass occupies residues 338–358 (LAILVFFTSMIFFVNNLTIVY). At 359-369 (DALYDGNHLTY) the chain is on the extracellular side. A helical membrane pass occupies residues 370–390 (YILLAIHTSACLLLLLNVVGI). Residues 391–394 (YKQS) are Cytoplasmic-facing. 2 helical membrane-spanning segments follow: residues 395–415 (RRAI…TFFT) and 416–436 (YASY…IVAF). The Cytoplasmic portion of the chain corresponds to 437 to 450 (RRARRLKRPVRMRN). The chain crosses the membrane as a helical span at residues 451–471 (IVAMLLFSLFILYVNHIFIAG). The Extracellular portion of the chain corresponds to 472–489 (TLYALDIYTIEMHTSVLR). A helical transmembrane segment spans residues 490–510 (YYFWLTILIIAIIIGMIAWLF). Residues 511-840 (DYQFSKVRIS…SKVMRVIRHK (330 aa)) lie on the Cytoplasmic side of the membrane.

Belongs to the LPG synthase family.

The protein localises to the cell membrane. The enzyme catalyses L-lysyl-tRNA(Lys) + a 1,2-diacyl-sn-glycero-3-phospho-(1'-sn-glycerol) = a 1,2-diacyl-sn-glycero-3-phospho-1'-(3'-O-L-lysyl)-sn-glycerol + tRNA(Lys). Functionally, catalyzes the transfer of a lysyl group from L-lysyl-tRNA(Lys) to membrane-bound phosphatidylglycerol (PG), which produces lysylphosphatidylglycerol (LPG), a major component of the bacterial membrane with a positive net charge. LPG synthesis contributes to bacterial virulence as it is involved in the resistance mechanism against cationic antimicrobial peptides (CAMP) produces by the host's immune system (defensins, cathelicidins) and by the competing microorganisms (bacteriocins). In fact, the modification of anionic phosphatidylglycerol with positively charged L-lysine results in repulsion of the peptides. The sequence is that of Phosphatidylglycerol lysyltransferase (mprF) from Staphylococcus aureus (strain Mu50 / ATCC 700699).